A 266-amino-acid chain; its full sequence is Small ribosomal subunit protein uS3 (266 aa).

The region spanning 39-107 (VREYLKKKLK…PVHVNIEEIR (69 aa)) is the KH type-2 domain. Residues 214–266 (PVVEEVTEDKRPRRNARPGDRRPRRDGEGGAPGARRGGPRRGAGKPEDGKTGE) are disordered. Composition is skewed to basic and acidic residues over residues 230–241 (RPGDRRPRRDGE) and 257–266 (GKPEDGKTGE).

The protein belongs to the universal ribosomal protein uS3 family. In terms of assembly, part of the 30S ribosomal subunit. Forms a tight complex with proteins S10 and S14.

In terms of biological role, binds the lower part of the 30S subunit head. Binds mRNA in the 70S ribosome, positioning it for translation. This chain is Small ribosomal subunit protein uS3, found in Burkholderia thailandensis (strain ATCC 700388 / DSM 13276 / CCUG 48851 / CIP 106301 / E264).